The primary structure comprises 333 residues: Taste receptor type 2 member 123 (333 aa).

The Extracellular segment spans residues 1–14 (MFSQKTNYSHLFTF). Residues 15-37 (SIIFYVEIVTGILGNGFIALVNI) form a helical membrane-spanning segment. Topologically, residues 38–57 (MDWLKRRRISTADQILTALA) are cytoplasmic. A helical transmembrane segment spans residues 58-77 (LTRLIYVWSVLICILLLFLC). Residues 78-91 (PHLSMRPEMFTAIG) lie on the Extracellular side of the membrane. Residues 92–114 (VIWVVDNHFSIWLATCLGVFYFL) form a helical membrane-spanning segment. Topologically, residues 115–133 (KIASFSNSLFLYLKWRVKK) are cytoplasmic. The chain crosses the membrane as a helical span at residues 134–156 (VVLMIILISLIFLMLNISSLGMY). At 157–204 (DHFSIDVYEGNMSYNLVDSTHFPRIFLFTNSSKVFLIANSSHVFLPIN) the chain is on the extracellular side. N-linked (GlcNAc...) asparagine glycosylation is found at Asn167, Asn186, and Asn195. Residues 205-227 (SLFMLIPFTVSLVAFFVLFLSLW) form a helical membrane-spanning segment. Over 228–250 (KHHKKMQVNAKGPRDASTMAHTK) the chain is Cytoplasmic. A helical membrane pass occupies residues 251 to 273 (ALQIGFSFLLLYAIYLLFIITGI). Residues 274-282 (LNLDLMRCI) lie on the Extracellular side of the membrane. The helical transmembrane segment at 283-305 (VILLFDHISGAVFSISHSFVLIL) threads the bilayer. The Cytoplasmic segment spans residues 306-333 (GNSKLRQATLSVLPCLRCRSKDMDTVVF).

Belongs to the G-protein coupled receptor T2R family. As to expression, expressed in subsets of taste receptor cells of the tongue and palate epithelium and exclusively in gustducin-positive cells. Expressed in the antrum and fundus (part of the stomach), duodenum and in gastric endocrine cells.

The protein localises to the membrane. Its function is as follows. Gustducin-coupled receptor implicated in the perception of bitter compounds in the oral cavity and the gastrointestinal tract. Signals through PLCB2 and the calcium-regulated cation channel TRPM5. The protein is Taste receptor type 2 member 123 (Tas2r123) of Rattus norvegicus (Rat).